The chain runs to 206 residues: Small ribosomal subunit protein uS4 (206 aa).

Residues 96 to 158 (SRLDNVVYRM…AKKQLRIQNA (63 aa)) enclose the S4 RNA-binding domain.

This sequence belongs to the universal ribosomal protein uS4 family. In terms of assembly, part of the 30S ribosomal subunit. Contacts protein S5. The interaction surface between S4 and S5 is involved in control of translational fidelity.

Its function is as follows. One of the primary rRNA binding proteins, it binds directly to 16S rRNA where it nucleates assembly of the body of the 30S subunit. In terms of biological role, with S5 and S12 plays an important role in translational accuracy. This is Small ribosomal subunit protein uS4 from Francisella tularensis subsp. mediasiatica (strain FSC147).